The chain runs to 211 residues: MNKGLIGKKLGMTQIFAEDGRRIAVTVVEAGPCVVVQKKSVAKDGYSAIQVGFGAKDASRANAAQVGHCKGAGAGVFTHYRELRMDNTDAYKLGDVIEAAVFEEGDLVDVTGTSIGKGFAGVIKRWGFKGGRSSHGSRFHRAPGSIGCSATPSRVFKNKKMPGQLGNEKVTVQRLKVVRVDAADNLILLGGAIPGSANGVVLIKDSVKAKK.

The protein belongs to the universal ribosomal protein uL3 family. Part of the 50S ribosomal subunit. Forms a cluster with proteins L14 and L19.

In terms of biological role, one of the primary rRNA binding proteins, it binds directly near the 3'-end of the 23S rRNA, where it nucleates assembly of the 50S subunit. The protein is Large ribosomal subunit protein uL3 of Citrifermentans bemidjiense (strain ATCC BAA-1014 / DSM 16622 / JCM 12645 / Bem) (Geobacter bemidjiensis).